The sequence spans 688 residues: Polyribonucleotide nucleotidyltransferase (688 aa).

Aspartate 484 and aspartate 490 together coordinate Mg(2+). The region spanning 550 to 609 (PQTEIFNVAPDKIIEIIGQGGRVIKEIVEKFEVKIDLNTPSGEVKIMGNKERVLKTKEFI) is the KH domain. The 63-residue stretch at 626-688 (DEVLEAQVKR…NKGKIALDLA (63 aa)) folds into the S1 motif domain.

It belongs to the polyribonucleotide nucleotidyltransferase family. The cofactor is Mg(2+).

The protein localises to the cytoplasm. The catalysed reaction is RNA(n+1) + phosphate = RNA(n) + a ribonucleoside 5'-diphosphate. Its function is as follows. Involved in mRNA degradation. Catalyzes the phosphorolysis of single-stranded polyribonucleotides processively in the 3'- to 5'-direction. The polypeptide is Polyribonucleotide nucleotidyltransferase (Helicobacter pylori (strain J99 / ATCC 700824) (Campylobacter pylori J99)).